The primary structure comprises 559 residues: Pentatricopeptide repeat-containing protein At2g42920, chloroplastic (559 aa).

Residues M1–P14 constitute a chloroplast transit peptide. PPR repeat units lie at residues N88 to V122, Q125 to D159, D160 to F190, D191 to R221, N222 to P256, D257 to L291, N292 to K322, Q323 to P357, D358 to K388, and S394 to E424. Positions I429–D504 are type E motif. The segment at F505–S535 is type E(+) motif.

The protein belongs to the PPR family. PCMP-E subfamily.

The protein localises to the plastid. It is found in the chloroplast. The sequence is that of Pentatricopeptide repeat-containing protein At2g42920, chloroplastic (PCMP-E75) from Arabidopsis thaliana (Mouse-ear cress).